Here is a 220-residue protein sequence, read N- to C-terminus: Probable acrEF/envCD operon repressor (220 aa).

The 61-residue stretch at Leu10 to Arg70 folds into the HTH tetR-type domain. The segment at residues Thr33–Phe52 is a DNA-binding region (H-T-H motif).

Functionally, potential regulator protein for the acrEF/envCD genes. The protein is Probable acrEF/envCD operon repressor (envR) of Escherichia coli O157:H7.